The following is a 280-amino-acid chain: Shikimate dehydrogenase (NADP(+)) (280 aa).

Shikimate is bound by residues 18-20 (SRS) and T65. K69 functions as the Proton acceptor in the catalytic mechanism. Residues N90 and D105 each coordinate shikimate. NADP(+)-binding positions include 131–135 (GAGGA), 154–159 (NRTRAR), and I219. Y221 provides a ligand contact to shikimate. Residue G242 coordinates NADP(+).

It belongs to the shikimate dehydrogenase family. As to quaternary structure, homodimer.

The enzyme catalyses shikimate + NADP(+) = 3-dehydroshikimate + NADPH + H(+). It functions in the pathway metabolic intermediate biosynthesis; chorismate biosynthesis; chorismate from D-erythrose 4-phosphate and phosphoenolpyruvate: step 4/7. Functionally, involved in the biosynthesis of the chorismate, which leads to the biosynthesis of aromatic amino acids. Catalyzes the reversible NADPH linked reduction of 3-dehydroshikimate (DHSA) to yield shikimate (SA). This Methylocella silvestris (strain DSM 15510 / CIP 108128 / LMG 27833 / NCIMB 13906 / BL2) protein is Shikimate dehydrogenase (NADP(+)).